Reading from the N-terminus, the 967-residue chain is Leucine-rich repeat receptor-like protein kinase PXC2 (967 aa).

The signal sequence occupies residues 1–20; that stretch reads MFNGAVSLLFLFLAVVSARA. Over 21–609 the chain is Extracellular; that stretch reads DPTFNDDVLG…QIRKSVLSIS (589 aa). LRR repeat units follow at residues 91-114, 115-139, 141-164, 165-189, 191-212, 214-236, 237-260, 262-284, 285-307, 308-332, and 334-356; these read LQFL…EFPH, LGSL…FFEQ, GSLR…LSYC, STLT…WFLK, LKSL…LGGL, DLRH…IGRC, SSLK…MKSL, SCSS…IGDI, ATLE…SLGN, LEFL…LSNC, and NLIS…MFTG. Asn103 and Asn127 each carry an N-linked (GlcNAc...) asparagine glycan. N-linked (GlcNAc...) asparagine glycosylation occurs at Asn171. The N-linked (GlcNAc...) asparagine glycan is linked to Asn219. N-linked (GlcNAc...) asparagine glycans are attached at residues Asn296, Asn315, and Asn331. N-linked (GlcNAc...) asparagine glycosylation is present at Asn374. LRR repeat units follow at residues 384–408, 410–432, 433–456, 457–480, 482–503, 504–528, and 530–552; these read LQGL…IWIL, SLLQ…IGGL, KVAE…IGGA, VSLK…ISNC, ALNT…SIGS, LSNL…IEKL, and HLLT…GFFN. Asn415, Asn446, Asn479, Asn487, Asn516, Asn535, Asn540, Asn571, and Asn587 each carry an N-linked (GlcNAc...) asparagine glycan. The helical transmembrane segment at 610–630 threads the bilayer; it reads ALIAIGAAAVIAIGVVAVTLL. At 631–967 the chain is on the cytoplasmic side; the sequence is NVHARSSVSR…LIQCPSHDLE (337 aa). The Protein kinase domain occupies 687–959; it reads LNKDSELGRG…EEVVKILELI (273 aa). ATP contacts are provided by residues 693 to 701 and Lys715; that span reads LGRGGFGVV.

Belongs to the protein kinase superfamily. Ser/Thr protein kinase family. In terms of tissue distribution, expressed in the vascular strands of cotyledons, the shoot apex, hypocotyls, roots, leaves, stems and flowers.

It localises to the cell membrane. In terms of biological role, leucine-rich repeat receptor-like protein kinase that may play a role in vascular tissues development. This is Leucine-rich repeat receptor-like protein kinase PXC2 from Arabidopsis thaliana (Mouse-ear cress).